Reading from the N-terminus, the 160-residue chain is MLVILKETARKLGNVGDVLKVKKGFARNYLIPSGKAVRATRANLAILENSKEKLAAQQAAELETASELAKSFTEIDVLPIYAQAERGVLFGAVSAKQVVAELSKKGIEITTKNVVLGAPIKALGEHEVRIFLHSRVECSLKIHILDASRRGADGTITGTS.

It belongs to the bacterial ribosomal protein bL9 family.

Binds to the 23S rRNA. The polypeptide is Large ribosomal subunit protein bL9 (Neorickettsia sennetsu (strain ATCC VR-367 / Miyayama) (Ehrlichia sennetsu)).